The primary structure comprises 126 residues: uncharacterized protein (126 aa).

The helical transmembrane segment at 5–25 (LIQHITSIFVFSFFFLFFFFS) threads the bilayer.

It is found in the membrane. This is an uncharacterized protein from Saccharomyces cerevisiae (strain ATCC 204508 / S288c) (Baker's yeast).